A 490-amino-acid chain; its full sequence is GTPase Der (490 aa).

EngA-type G domains lie at 1–165 (MRIA…QIPV) and 227–400 (LKVA…TIAT). GTP-binding positions include 7 to 14 (GRPNVGKS), 54 to 58 (DTGGV), 117 to 120 (NKAD), 233 to 240 (GHPNVGKS), 280 to 284 (DTAGL), and 345 to 348 (NKWD). One can recognise a KH-like domain in the interval 401 to 485 (TKLSTSLVNK…PFDLEYKAKP (85 aa)).

It belongs to the TRAFAC class TrmE-Era-EngA-EngB-Septin-like GTPase superfamily. EngA (Der) GTPase family. Associates with the 50S ribosomal subunit.

Its function is as follows. GTPase that plays an essential role in the late steps of ribosome biogenesis. In Chlamydia trachomatis serovar L2b (strain UCH-1/proctitis), this protein is GTPase Der.